Reading from the N-terminus, the 470-residue chain is MSSGRIVQIIGAVIDVEFPRDSVPKVYDALTVADKGLTLEVQQQLGDGVVRAIAMGGSEGVSRGLAVENTGAPINVPVGTATLGRIMDVLGNPIDEKGPINETERASIHRKAPKYDELAASEELLATGIKVIDLVCPFAKGGKVGLFGGAGVGKTVNMMELINNIATEHSGLSVFAGVGERTREGNDFYFEMQEAGVVNVDKFDESKVAMVYGQMNEPPGNRLRVALTGLTMAEKFRDEGKDVLLFVDNIYRYTLAGTEVSALLGRMPSAVGYQPTLAEEMGVLQERITSTKTGSITSIQAVYVPADDLTDPSPATTFAHLDSTVVLSRDIAAKGIYPAIDPLDSSSRQLDPLIIGQEHYDTARGVQSVLQRYKELKDIIAILGMDELSEEDKLTVSRARKIERFLSQPFNVAKVFTGQDGKIVSLKDTISGFQGLLSGQYDDLPEQAFYMVGSIDEAIEKAKKMKEKAA.

Residue 148–155 (GGAGVGKT) coordinates ATP.

This sequence belongs to the ATPase alpha/beta chains family. As to quaternary structure, F-type ATPases have 2 components, CF(1) - the catalytic core - and CF(0) - the membrane proton channel. CF(1) has five subunits: alpha(3), beta(3), gamma(1), delta(1), epsilon(1). CF(0) has three main subunits: a(1), b(2) and c(9-12). The alpha and beta chains form an alternating ring which encloses part of the gamma chain. CF(1) is attached to CF(0) by a central stalk formed by the gamma and epsilon chains, while a peripheral stalk is formed by the delta and b chains.

Its subcellular location is the cell inner membrane. It catalyses the reaction ATP + H2O + 4 H(+)(in) = ADP + phosphate + 5 H(+)(out). Its function is as follows. Produces ATP from ADP in the presence of a proton gradient across the membrane. The catalytic sites are hosted primarily by the beta subunits. This chain is ATP synthase subunit beta, found in Saccharophagus degradans (strain 2-40 / ATCC 43961 / DSM 17024).